The primary structure comprises 104 residues: L-rhamnose mutarotase (104 aa).

Position 18 (tyrosine 18) interacts with substrate. The active-site Proton donor is the histidine 22. Substrate-binding positions include tyrosine 41 and 76 to 77; that span reads WW. The segment at 85-104 is disordered; sequence PSNPDNSPISDALDPVFYLD.

It belongs to the rhamnose mutarotase family. Homodimer.

Its subcellular location is the cytoplasm. It catalyses the reaction alpha-L-rhamnose = beta-L-rhamnose. Its pathway is carbohydrate metabolism; L-rhamnose metabolism. Functionally, involved in the anomeric conversion of L-rhamnose. This Pectobacterium atrosepticum (strain SCRI 1043 / ATCC BAA-672) (Erwinia carotovora subsp. atroseptica) protein is L-rhamnose mutarotase.